The following is a 933-amino-acid chain: Progesterone receptor (933 aa).

Residues 1 to 48 are disordered; that stretch reads MTELKAKGPRAPHVAGGPPSPEVGSPLLCRPAAGPFEGSQTSDTLPEV. An AF3; mediates transcriptional activation region spans residues 1-164; that stretch reads MTELKAKGPR…PATQRVLSPL (164 aa). The interval 1-566 is modulating, Pro-Rich; it reads MTELKAKGPR…YSFESLPQKI (566 aa). At serine 20 the chain carries Phosphoserine. Positions 55–59 match the LXXL motif 1 motif; it reads LDGLL. The disordered stretch occupies residues 66–255; it reads GQDLPDEKTQ…GAAAGGGAAA (190 aa). Serine 81 carries the phosphoserine modification. The LXXL motif 2 motif lies at 115–119; it reads LDTLL. Phosphoserine occurs at positions 130 and 162. Residues 165–305 form a mediates transcriptional transrepression region; that stretch reads MSRSGGKTGD…LATTMMDFIH (141 aa). Residues 183-187 carry the Nuclear localization signal motif; that stretch reads KVLPR. Residues serine 190 and serine 213 each carry the phosphoserine modification. Serine 294 is modified (phosphoserine; by MAPK1). The interval 331–378 is disordered; the sequence is GGAGAASAFAPPQSSPSASSTPVAVGDFPDCAYPPDAEPKDNAYPLYG. The span at 335–350 shows a compositional bias: low complexity; the sequence is AASAFAPPQSSPSASS. The residue at position 345 (serine 345) is a Phosphoserine; by MAPK. Lysine 388 is covalently cross-linked (Glycyl lysine isopeptide (Lys-Gly) (interchain with G-Cter in SUMO); alternate). Residue lysine 388 forms a Glycyl lysine isopeptide (Lys-Gly) (interchain with G-Cter in ubiquitin); alternate linkage. Position 400 is a phosphoserine; by CDK2 (serine 400). Positions 415 to 454 are disordered; it reads PDYPLGPPPQLPPRAPPSRPGEAAVTAAPASASVSSASSP. The span at 418 to 433 shows a compositional bias: pro residues; it reads PLGPPPQLPPRAPPSR. Residues 437 to 454 are compositionally biased toward low complexity; that stretch reads AAVTAAPASASVSSASSP. An AF1; mediates transcriptional activation region spans residues 456–546; it reads STLECILYKA…VYPPYLNYLR (91 aa). A Glycyl lysine isopeptide (Lys-Gly) (interchain with G-Cter in SUMO) cross-link involves residue lysine 531. 2 NR C4-type zinc fingers span residues 567–587 and 603–627; these read CLIC…CGSC and CAGR…LRKC. Positions 567–639 form a DNA-binding region, nuclear receptor; sequence CLICGDEASG…AGMVLGGRKF (73 aa). Phosphoserine is present on serine 676. Residues 679-913 form the NR LBD domain; it reads QDIQLIPPLI…EFPEMMSEVI (235 aa). The interval 687 to 933 is AF2; mediates transcriptional activation; it reads LIKLLMSIEP…MVKPLLFHKK (247 aa).

Belongs to the nuclear hormone receptor family. As to quaternary structure, interacts with SMARD1 and UNC45A. Interacts with CUEDC2; the interaction promotes ubiquitination, decreases sumoylation, and represses transcriptional activity. Interacts with PIAS3; the interaction promotes sumoylation of PR in a hormone-dependent manner, inhibits DNA-binding, and alters nuclear export. Interacts with SP1; the interaction requires ligand-induced phosphorylation on Ser-345 by ERK1/2-MAPK. Interacts with PRMT2. Interacts with NCOA2 and NCOA1. Interacts with KLF9. Interacts with GTF2B. Phosphorylated on multiple serine sites. Several of these sites are hormone-dependent. Phosphorylation on Ser-294 is highly hormone-dependent and modulates ubiquitination and sumoylation on Lys-388. Phosphorylation on Ser-345 also requires induction by hormone. Basal phosphorylation on Ser-81, Ser-162, Ser-190 and Ser-400 is increased in response to progesterone and can be phosphorylated in vitro by the CDK2-A1 complex. Increased levels of phosphorylation on Ser-400 also in the presence of EGF, heregulin, IGF, PMA and FBS. Phosphorylation at this site by CDK2 is ligand-independent, and increases nuclear translocation and transcriptional activity. Phosphorylation at Ser-162 and Ser-294, but not at Ser-190, is impaired during the G(2)/M phase of the cell cycle. Phosphorylation on Ser-345 by ERK1/2 MAPK is required for interaction with SP1. In terms of processing, sumoylation is hormone-dependent and represses transcriptional activity. Sumoylation on all three sites is enhanced by PIAS3. Desumoylated by SENP1. Sumoylation on Lys-388, the main site of sumoylation, is repressed by ubiquitination on the same site, and modulated by phosphorylation at Ser-294. Post-translationally, ubiquitination is hormone-dependent and represses sumoylation on the same site. Promoted by MAPK-mediated phosphorylation on Ser-294. Palmitoylated by ZDHHC7 and ZDHHC21. Palmitoylation is required for plasma membrane targeting and for rapid intracellular signaling via ERK and AKT kinases and cAMP generation.

Its subcellular location is the nucleus. It is found in the cytoplasm. Its function is as follows. The steroid hormones and their receptors are involved in the regulation of eukaryotic gene expression and affect cellular proliferation and differentiation in target tissues. Transcriptional activator of several progesteron-dependent promoters in a variety of cell types. Involved in activation of SRC-dependent MAPK signaling on hormone stimulation. This is Progesterone receptor (PGR) from Trachypithecus obscurus (Dusky leaf-monkey).